An 86-amino-acid polypeptide reads, in one-letter code: Large ribosomal subunit protein bL31 (86 aa).

Residues 66–86 form a disordered region; it reads GMGSANSATSKEQKADKDSQK. Residues 76–86 show a composition bias toward basic and acidic residues; that stretch reads KEQKADKDSQK.

The protein belongs to the bacterial ribosomal protein bL31 family. Type A subfamily. In terms of assembly, part of the 50S ribosomal subunit.

In terms of biological role, binds the 23S rRNA. This Prochlorococcus marinus (strain MIT 9215) protein is Large ribosomal subunit protein bL31.